The sequence spans 122 residues: Large ribosomal subunit protein bL12 (122 aa).

Belongs to the bacterial ribosomal protein bL12 family. In terms of assembly, homodimer. Part of the ribosomal stalk of the 50S ribosomal subunit. Forms a multimeric L10(L12)X complex, where L10 forms an elongated spine to which 2 to 4 L12 dimers bind in a sequential fashion. Binds GTP-bound translation factors.

Forms part of the ribosomal stalk which helps the ribosome interact with GTP-bound translation factors. Is thus essential for accurate translation. The sequence is that of Large ribosomal subunit protein bL12 from Clostridium botulinum (strain Langeland / NCTC 10281 / Type F).